A 259-amino-acid polypeptide reads, in one-letter code: Acetylglutamate kinase (259 aa).

Substrate-binding positions include glycine 46–glycine 47, arginine 68, and asparagine 162.

This sequence belongs to the acetylglutamate kinase family. ArgB subfamily.

Its subcellular location is the cytoplasm. It carries out the reaction N-acetyl-L-glutamate + ATP = N-acetyl-L-glutamyl 5-phosphate + ADP. The protein operates within amino-acid biosynthesis; L-arginine biosynthesis; N(2)-acetyl-L-ornithine from L-glutamate: step 2/4. Its function is as follows. Catalyzes the ATP-dependent phosphorylation of N-acetyl-L-glutamate. This Roseiflexus castenholzii (strain DSM 13941 / HLO8) protein is Acetylglutamate kinase.